Here is a 458-residue protein sequence, read N- to C-terminus: UDP-N-acetylmuramoylalanine--D-glutamate ligase (458 aa).

An ATP-binding site is contributed by 118–124; that stretch reads GTNGKTT.

The protein belongs to the MurCDEF family.

Its subcellular location is the cytoplasm. The catalysed reaction is UDP-N-acetyl-alpha-D-muramoyl-L-alanine + D-glutamate + ATP = UDP-N-acetyl-alpha-D-muramoyl-L-alanyl-D-glutamate + ADP + phosphate + H(+). It participates in cell wall biogenesis; peptidoglycan biosynthesis. Cell wall formation. Catalyzes the addition of glutamate to the nucleotide precursor UDP-N-acetylmuramoyl-L-alanine (UMA). This Ligilactobacillus salivarius (strain UCC118) (Lactobacillus salivarius) protein is UDP-N-acetylmuramoylalanine--D-glutamate ligase.